Reading from the N-terminus, the 453-residue chain is tRNA modification GTPase MnmE (453 aa).

Positions 22, 79, and 119 each coordinate (6S)-5-formyl-5,6,7,8-tetrahydrofolate. The 162-residue stretch at 215-376 (GMKVVIAGRP…LKQHLKSLMG (162 aa)) folds into the TrmE-type G domain. Asparagine 225 is a K(+) binding site. GTP contacts are provided by residues 225–230 (NAGKSS), 244–250 (TEIAGTT), 269–272 (DTAG), and 334–337 (NKAD). A Mg(2+)-binding site is contributed by serine 229. Residues threonine 244, isoleucine 246, and threonine 249 each coordinate K(+). Threonine 250 serves as a coordination point for Mg(2+). Lysine 453 is a (6S)-5-formyl-5,6,7,8-tetrahydrofolate binding site.

The protein belongs to the TRAFAC class TrmE-Era-EngA-EngB-Septin-like GTPase superfamily. TrmE GTPase family. Homodimer. Heterotetramer of two MnmE and two MnmG subunits. Requires K(+) as cofactor.

It is found in the cytoplasm. Its function is as follows. Exhibits a very high intrinsic GTPase hydrolysis rate. Involved in the addition of a carboxymethylaminomethyl (cmnm) group at the wobble position (U34) of certain tRNAs, forming tRNA-cmnm(5)s(2)U34. The polypeptide is tRNA modification GTPase MnmE (Shewanella baltica (strain OS195)).